We begin with the raw amino-acid sequence, 399 residues long: Phosphoglycerate kinase (399 aa).

Substrate contacts are provided by residues 22-24, arginine 37, 60-63, arginine 119, and arginine 152; these read DLN and HFGR. ATP contacts are provided by residues lysine 202, glutamate 324, and 354–357; that span reads GGDT.

It belongs to the phosphoglycerate kinase family. In terms of assembly, monomer.

Its subcellular location is the cytoplasm. The catalysed reaction is (2R)-3-phosphoglycerate + ATP = (2R)-3-phospho-glyceroyl phosphate + ADP. It participates in carbohydrate degradation; glycolysis; pyruvate from D-glyceraldehyde 3-phosphate: step 2/5. The polypeptide is Phosphoglycerate kinase (Rhizobium meliloti (strain 1021) (Ensifer meliloti)).